We begin with the raw amino-acid sequence, 156 residues long: ATP synthase subunit b', organellar chromatophore (156 aa).

The helical transmembrane segment at 23–43 (TLPLMAIQVVFLTFILNAIFF) threads the bilayer.

This sequence belongs to the ATPase B chain family. In terms of assembly, F-type ATPases have 2 components, F(1) - the catalytic core - and F(0) - the membrane proton channel. F(1) has five subunits: alpha(3), beta(3), gamma(1), delta(1), epsilon(1). F(0) has four main subunits: a(1), b(1), b'(1) and c(10-14). The alpha and beta chains form an alternating ring which encloses part of the gamma chain. F(1) is attached to F(0) by a central stalk formed by the gamma and epsilon chains, while a peripheral stalk is formed by the delta, b and b' chains.

It localises to the plastid. Its subcellular location is the organellar chromatophore thylakoid membrane. In terms of biological role, f(1)F(0) ATP synthase produces ATP from ADP in the presence of a proton or sodium gradient. F-type ATPases consist of two structural domains, F(1) containing the extramembraneous catalytic core and F(0) containing the membrane proton channel, linked together by a central stalk and a peripheral stalk. During catalysis, ATP synthesis in the catalytic domain of F(1) is coupled via a rotary mechanism of the central stalk subunits to proton translocation. Component of the F(0) channel, it forms part of the peripheral stalk, linking F(1) to F(0). The b'-subunit is a diverged and duplicated form of b found in plants and photosynthetic bacteria. This is ATP synthase subunit b', organellar chromatophore from Paulinella chromatophora.